A 485-amino-acid polypeptide reads, in one-letter code: Glutamyl-tRNA(Gln) amidotransferase subunit A (485 aa).

Catalysis depends on charge relay system residues lysine 79 and serine 154. Catalysis depends on serine 178, which acts as the Acyl-ester intermediate.

It belongs to the amidase family. GatA subfamily. Heterotrimer of A, B and C subunits.

The enzyme catalyses L-glutamyl-tRNA(Gln) + L-glutamine + ATP + H2O = L-glutaminyl-tRNA(Gln) + L-glutamate + ADP + phosphate + H(+). In terms of biological role, allows the formation of correctly charged Gln-tRNA(Gln) through the transamidation of misacylated Glu-tRNA(Gln) in organisms which lack glutaminyl-tRNA synthetase. The reaction takes place in the presence of glutamine and ATP through an activated gamma-phospho-Glu-tRNA(Gln). The chain is Glutamyl-tRNA(Gln) amidotransferase subunit A from Bacillus pumilus (strain SAFR-032).